The chain runs to 93 residues: Small ribosomal subunit protein uS15 (93 aa).

The protein belongs to the universal ribosomal protein uS15 family. In terms of assembly, part of the 30S ribosomal subunit. Forms a bridge to the 50S subunit in the 70S ribosome, contacting the 23S rRNA.

Its function is as follows. One of the primary rRNA binding proteins, it binds directly to 16S rRNA where it helps nucleate assembly of the platform of the 30S subunit by binding and bridging several RNA helices of the 16S rRNA. In terms of biological role, forms an intersubunit bridge (bridge B4) with the 23S rRNA of the 50S subunit in the ribosome. The polypeptide is Small ribosomal subunit protein uS15 (Ehrlichia canis (strain Jake)).